Reading from the N-terminus, the 937-residue chain is Bifunctional glutamine synthetase adenylyltransferase/adenylyl-removing enzyme (937 aa).

The segment at 1 to 436 is adenylyl removase; that stretch reads MSQPIPSASP…AAEFAELLAP (436 aa). The interval 443–937 is adenylyl transferase; it reads PDTLADYWRA…QLRFQPGKGA (495 aa).

The protein belongs to the GlnE family. Requires Mg(2+) as cofactor.

It catalyses the reaction [glutamine synthetase]-O(4)-(5'-adenylyl)-L-tyrosine + phosphate = [glutamine synthetase]-L-tyrosine + ADP. It carries out the reaction [glutamine synthetase]-L-tyrosine + ATP = [glutamine synthetase]-O(4)-(5'-adenylyl)-L-tyrosine + diphosphate. Functionally, involved in the regulation of glutamine synthetase GlnA, a key enzyme in the process to assimilate ammonia. When cellular nitrogen levels are high, the C-terminal adenylyl transferase (AT) inactivates GlnA by covalent transfer of an adenylyl group from ATP to specific tyrosine residue of GlnA, thus reducing its activity. Conversely, when nitrogen levels are low, the N-terminal adenylyl removase (AR) activates GlnA by removing the adenylyl group by phosphorolysis, increasing its activity. The regulatory region of GlnE binds the signal transduction protein PII (GlnB) which indicates the nitrogen status of the cell. The sequence is that of Bifunctional glutamine synthetase adenylyltransferase/adenylyl-removing enzyme from Xanthomonas campestris pv. campestris (strain B100).